Reading from the N-terminus, the 92-residue chain is N(2)-fixation sustaining protein CowN (92 aa).

Belongs to the CowN family.

In terms of biological role, is required to sustain N(2)-dependent growth in the presence of low levels of carbon monoxide (CO). Probably acts by protecting the N(2) fixation ability of the nitrogenase complex, which is inactivated in the presence of CO. The protein is N(2)-fixation sustaining protein CowN of Rhodopseudomonas palustris (strain ATCC BAA-98 / CGA009).